The primary structure comprises 40 residues: Alpha-conotoxin GIC (40 aa).

The propeptide occupies Ser-1–Lys-20. Disulfide bonds link Cys-22–Cys-28 and Cys-23–Cys-36. Residues Ser-24–Pro-26 form a ser-Xaa-Pro motif, crucial for potent interaction with nAChR region. Cys-36 carries the cysteine amide modification.

In terms of tissue distribution, expressed by the venom duct.

The protein localises to the secreted. Functionally, alpha-conotoxins bind to the nicotinic acetylcholine receptors (nAChR) and inhibit them. This toxin reversibly blocks neuronal nAChRs (alpha-3/beta-2 = alpha-6 or -3/beta-2 or -3 &gt; alpha-3/beta-4 = alpha-4/beta-2). The protein is Alpha-conotoxin GIC of Conus geographus (Geography cone).